A 784-amino-acid polypeptide reads, in one-letter code: Transcription factor kayak (784 aa).

3 stretches are compositionally biased toward low complexity: residues Gln-97–Gln-106, Asn-115–Met-126, and Gln-198–Gln-227. Disordered regions lie at residues Gln-97–Met-126, Tyr-196–Thr-231, Pro-358–Ser-404, and Ser-421–Ile-464. Over residues Ser-365–Gln-378 the composition is skewed to polar residues. Low complexity predominate over residues Thr-380–Gly-397. The segment covering Ser-421–Thr-438 has biased composition (polar residues). The 64-residue stretch at Glu-459–His-522 folds into the bZIP domain. A basic motif region spans residues Lys-461–Arg-463. The segment at Ile-464–Leu-471 is leucine-zipper. Ser-594 carries the post-translational modification Phosphoserine. Disordered stretches follow at residues Gln-616–Lys-635 and Pro-759–Leu-784.

Belongs to the bZIP family. Fos subfamily. As to quaternary structure, homodimer. Heterodimer with Jra. The kay-Jra heterodimer binds more stably to the AP-1 site than either of the two proteins alone.

Its subcellular location is the nucleus. Its function is as follows. Developmentally regulated transcription factor AP-1 binds and recognizes the enhancer DNA sequence: 5'-TGA[CG]TCA-3'. May play a role in the function or determination of a particular subset of cells in the developing embryo. It is able to carry out its function either independently of or in conjunction with Jra. This chain is Transcription factor kayak, found in Drosophila mojavensis (Fruit fly).